The chain runs to 50 residues: MAREGFTLACKECKMENYISKKNKKKHVEKLEINKFCSKCNSKTMHREKK.

This sequence belongs to the bacterial ribosomal protein bL33 family.

The polypeptide is Large ribosomal subunit protein bL33A (rpmG1) (Mycoplasmopsis pulmonis (strain UAB CTIP) (Mycoplasma pulmonis)).